The following is a 318-amino-acid chain: tRNA uridine(34) hydroxylase (318 aa).

The Rhodanese domain occupies 123–217; sequence EDDDTVIIDA…YGKDPETKGQ (95 aa). Cysteine 177 acts as the Cysteine persulfide intermediate in catalysis.

Belongs to the TrhO family.

It carries out the reaction uridine(34) in tRNA + AH2 + O2 = 5-hydroxyuridine(34) in tRNA + A + H2O. Functionally, catalyzes oxygen-dependent 5-hydroxyuridine (ho5U) modification at position 34 in tRNAs. This Staphylococcus aureus (strain Mu3 / ATCC 700698) protein is tRNA uridine(34) hydroxylase.